The chain runs to 59 residues: Temperature acclimation protein A (59 aa).

The 55-residue stretch at 1–55 folds into the CSD domain; the sequence is FNDEKGFGFITPESGPDLFVHFRAIQGNGFKSLKEGQKVTFIAVQGQKGMQADKV.

The protein resides in the cytoplasm. Affects cell viability at low temperatures. This Pseudomonas fragi protein is Temperature acclimation protein A (tapA).